A 500-amino-acid chain; its full sequence is Glycerol kinase (500 aa).

T12 serves as a coordination point for ADP. The ATP site is built by T12, T13, and S14. Sn-glycerol 3-phosphate is bound at residue T12. An ADP-binding site is contributed by R16. Positions 82, 83, 135, and 245 each coordinate sn-glycerol 3-phosphate. R82, E83, Y135, D245, and Q246 together coordinate glycerol. T267 and G310 together coordinate ADP. Residues T267, G310, Q314, and G411 each contribute to the ATP site. G411 and N415 together coordinate ADP.

This sequence belongs to the FGGY kinase family. As to quaternary structure, homotetramer and homodimer (in equilibrium).

The catalysed reaction is glycerol + ATP = sn-glycerol 3-phosphate + ADP + H(+). It participates in polyol metabolism; glycerol degradation via glycerol kinase pathway; sn-glycerol 3-phosphate from glycerol: step 1/1. Activated by phosphorylation and inhibited by fructose 1,6-bisphosphate (FBP). In terms of biological role, key enzyme in the regulation of glycerol uptake and metabolism. Catalyzes the phosphorylation of glycerol to yield sn-glycerol 3-phosphate. This Clostridium perfringens (strain ATCC 13124 / DSM 756 / JCM 1290 / NCIMB 6125 / NCTC 8237 / Type A) protein is Glycerol kinase.